The sequence spans 324 residues: Delta-aminolevulinic acid dehydratase (324 aa).

Cys-118, Cys-120, and Cys-128 together coordinate Zn(2+). Lys-195 serves as the catalytic Schiff-base intermediate with substrate. 5-aminolevulinate contacts are provided by Arg-205 and Arg-217. Glu-233 is a binding site for Mg(2+). The Schiff-base intermediate with substrate role is filled by Lys-248. Residues Ser-274 and Tyr-313 each contribute to the 5-aminolevulinate site.

It belongs to the ALAD family. In terms of assembly, homooctamer. The cofactor is Zn(2+).

It catalyses the reaction 2 5-aminolevulinate = porphobilinogen + 2 H2O + H(+). It participates in porphyrin-containing compound metabolism; protoporphyrin-IX biosynthesis; coproporphyrinogen-III from 5-aminolevulinate: step 1/4. Its function is as follows. Catalyzes an early step in the biosynthesis of tetrapyrroles. Binds two molecules of 5-aminolevulinate per subunit, each at a distinct site, and catalyzes their condensation to form porphobilinogen. The sequence is that of Delta-aminolevulinic acid dehydratase (hemB) from Staphylococcus epidermidis (strain ATCC 12228 / FDA PCI 1200).